The following is a 256-amino-acid chain: Matrix protein (256 aa).

The interval 1–110 is interaction with M2-1; that stretch reads METYVNKLHE…KLAYDVTTPC (110 aa). The nuclear targeting and binding to host importin KPNB1 stretch occupies residues 110–183; it reads CEIKACSLTC…LNTLENITTT (74 aa). A Nuclear export signal motif is present at residues 194–206; it reads IIPYSGLLLVITV. Thr-205 carries the post-translational modification Phosphothreonine; by host CK2.

The protein belongs to the pneumovirinae M protein family. In terms of assembly, forms dimers. Forms higher-order oligomers. Interacts with glycoprotein G (via N-terminus). Interacts with protein M2-1; this interaction directs the matrix protein localization to cytoplasmic inclusions comprising viral proteins L, N, P, and M2-1 and mediates the matrix protein association with the nucleocapsid. Interacts with host importin KPNB1; this interaction mediates nuclear import of the matrix protein early during infection. Interacts with host AP3M1; this interaction plays an essential role in trafficking the matrix protein in host cells. Interacts with host CAV1; this interaction probably facilitates viral budding. Interacts with host CFL1; this interaction probably facilitates viral replication. Interacts with host ZNF502; this interaction probably facilitates viral release. Interacts with host RACK1. Phosphorylation is important for oligomerization.

The protein resides in the virion. The protein localises to the host cytoplasm. It is found in the host nucleus. It localises to the host cell membrane. In terms of biological role, plays a crucial role in virus assembly into filaments and budding. Early in infection, localizes in the nucleus where it inhibits host cell transcription through direct binding to host chromatin. Later in infection, traffics to the cytoplasm through the action of host CRM1 to associate with inclusion bodies, the site of viral transcription and replication. During virus assembly and budding, acts as a bridge between the nucleocapsid and the lipid bilayer. Also plays a role in the inhibition of host interferon-beta response in a RACK1-dependent manner. This chain is Matrix protein (M), found in Homo sapiens (Human).